The sequence spans 227 residues: MGDNYSTYLLDIEGTVCPISFVKETLFPYFTKKVPQLVQQDTRDSPVSNILSQFHIDDKEQLQAHILELVAKDVKDPILKQLQGYIWAQGYESGQIKAPVYADAIDFIKRKKRVFIYSSGSVKAQKLLFGYVQDPNAPAHDSLDLNSYIDGYFDINTSGKKTETQSYANILRDIGAKASEVLFLSDNPLELDAAAGVGIATGLASRPGNAPVPDGQKYQVYKDFETL.

2 residues coordinate Mg(2+): Asp11 and Glu13. Substrate contacts are provided by residues 118–119 and Lys161; that span reads SS. Residue Asp186 participates in Mg(2+) binding.

This sequence belongs to the HAD-like hydrolase superfamily. MasA/MtnC family. As to quaternary structure, monomer. It depends on Mg(2+) as a cofactor.

The protein resides in the cytoplasm. The protein localises to the nucleus. It carries out the reaction 5-methylsulfanyl-2,3-dioxopentyl phosphate + H2O = 1,2-dihydroxy-5-(methylsulfanyl)pent-1-en-3-one + phosphate. The protein operates within amino-acid biosynthesis; L-methionine biosynthesis via salvage pathway; L-methionine from S-methyl-5-thio-alpha-D-ribose 1-phosphate: step 3/6. It functions in the pathway amino-acid biosynthesis; L-methionine biosynthesis via salvage pathway; L-methionine from S-methyl-5-thio-alpha-D-ribose 1-phosphate: step 4/6. Bifunctional enzyme that catalyzes the enolization of 2,3-diketo-5-methylthiopentyl-1-phosphate (DK-MTP-1-P) into the intermediate 2-hydroxy-3-keto-5-methylthiopentenyl-1-phosphate (HK-MTPenyl-1-P), which is then dephosphorylated to form the acireductone 1,2-dihydroxy-3-keto-5-methylthiopentene (DHK-MTPene). The polypeptide is Enolase-phosphatase E1 (Saccharomyces cerevisiae (strain RM11-1a) (Baker's yeast)).